Consider the following 300-residue polypeptide: 4-hydroxy-tetrahydrodipicolinate synthase (300 aa).

Thr-45 serves as a coordination point for pyruvate. The active-site Proton donor/acceptor is Tyr-140. Lys-169 functions as the Schiff-base intermediate with substrate in the catalytic mechanism. Ile-210 contacts pyruvate.

It belongs to the DapA family. As to quaternary structure, homotetramer; dimer of dimers.

Its subcellular location is the cytoplasm. It catalyses the reaction L-aspartate 4-semialdehyde + pyruvate = (2S,4S)-4-hydroxy-2,3,4,5-tetrahydrodipicolinate + H2O + H(+). It participates in amino-acid biosynthesis; L-lysine biosynthesis via DAP pathway; (S)-tetrahydrodipicolinate from L-aspartate: step 3/4. Functionally, catalyzes the condensation of (S)-aspartate-beta-semialdehyde [(S)-ASA] and pyruvate to 4-hydroxy-tetrahydrodipicolinate (HTPA). In Helicobacter pylori (strain Shi470), this protein is 4-hydroxy-tetrahydrodipicolinate synthase.